The sequence spans 260 residues: NAD-dependent protein deacetylase (260 aa).

Residues 9-260 enclose the Deacetylase sirtuin-type domain; the sequence is DDIDGETLDA…QVLPAIVERL (252 aa). Ala-35, Thr-39, Phe-46, Arg-47, Gln-114, Ile-116, Asp-117, and His-132 together coordinate NAD(+). Residue Phe-46 participates in nicotinamide binding. Nicotinamide is bound by residues Ile-116 and Asp-117. The active-site Proton acceptor is His-132. Residues Cys-140, Cys-143, Cys-166, and Cys-168 each coordinate Zn(2+). Residues Ser-206, Ser-207, Asn-231, Asp-248, and Val-249 each contribute to the NAD(+) site.

This sequence belongs to the sirtuin family. Class U subfamily. Zn(2+) is required as a cofactor.

It localises to the cytoplasm. It catalyses the reaction N(6)-acetyl-L-lysyl-[protein] + NAD(+) + H2O = 2''-O-acetyl-ADP-D-ribose + nicotinamide + L-lysyl-[protein]. In terms of biological role, NAD-dependent protein deacetylase which modulates the activities of several enzymes which are inactive in their acetylated form. Deacetylates the N-terminal lysine residue of Alba, the major archaeal chromatin protein and that, in turn, increases Alba's DNA binding affinity, thereby repressing transcription. The polypeptide is NAD-dependent protein deacetylase (Haloarcula marismortui (strain ATCC 43049 / DSM 3752 / JCM 8966 / VKM B-1809) (Halobacterium marismortui)).